Reading from the N-terminus, the 229-residue chain is Response regulator SaeR (229 aa).

Residues 3–116 form the Response regulatory domain; sequence HLLIVDDEKD…ELVLRTNNLL (114 aa). Asp51 is subject to 4-aspartylphosphate. The segment at residues 128–227 is a DNA-binding region (ompR/PhoB-type); it reads IEQLEFDGLV…VWGLGYKFER (100 aa).

Phosphorylated by SaeS.

Its subcellular location is the cytoplasm. Member of the two-component regulatory system SaeR/SaeS. Probably functions as a transcriptional regulator via a specific DNA-binding domain, recognizing motifs near the promoter sequences of target genes. The sequence is that of Response regulator SaeR (saeR) from Staphylococcus epidermidis (strain ATCC 35984 / DSM 28319 / BCRC 17069 / CCUG 31568 / BM 3577 / RP62A).